We begin with the raw amino-acid sequence, 381 residues long: uncharacterized protein (381 aa).

2 disordered regions span residues 1–20 and 36–381; these read MPYY…FDPT and IPPS…EDDE. Acidic residues predominate over residues 9 to 18; sequence NDVDDFDEFD. 2 stretches are compositionally biased toward basic and acidic residues: residues 166 to 175 and 186 to 237; these read TEVEYGRRPE and SESE…EGYR. Residues S339, S346, and S357 each carry the phosphoserine modification. Basic residues predominate over residues 364 to 374; it reads KKHRHKHHHQK.

This is an uncharacterized protein from Arabidopsis thaliana (Mouse-ear cress).